Here is a 314-residue protein sequence, read N- to C-terminus: Methionyl-tRNA formyltransferase (314 aa).

110 to 113 (SLLP) is a binding site for (6S)-5,6,7,8-tetrahydrofolate.

It belongs to the Fmt family.

It carries out the reaction L-methionyl-tRNA(fMet) + (6R)-10-formyltetrahydrofolate = N-formyl-L-methionyl-tRNA(fMet) + (6S)-5,6,7,8-tetrahydrofolate + H(+). In terms of biological role, attaches a formyl group to the free amino group of methionyl-tRNA(fMet). The formyl group appears to play a dual role in the initiator identity of N-formylmethionyl-tRNA by promoting its recognition by IF2 and preventing the misappropriation of this tRNA by the elongation apparatus. This chain is Methionyl-tRNA formyltransferase, found in Bacillus cereus (strain G9842).